The following is a 331-amino-acid chain: Olfactory receptor 10S1 (331 aa).

At 1–38 (MTSRSVCEKMTMTTENPNQTVVSHFFLEGLRYTAKHSS) the chain is on the extracellular side. N18 carries N-linked (GlcNAc...) asparagine glycosylation. A helical transmembrane segment spans residues 39 to 59 (LFFLLFLLIYSITVAGNLLIL). At 60 to 67 (LTVGSDSH) the chain is on the cytoplasmic side. Residues 68-88 (LSLPMYHFLGHLSFLDACLST) form a helical membrane-spanning segment. Residues 89-113 (VTVPKVMAGLLTLDGKVISFEGCAV) are Extracellular-facing. A disulfide bond links C111 and C203. A helical transmembrane segment spans residues 114-134 (QLYCFHFLASTECFLYTVMAY). Residues 135-153 (DRYLAICQPLHYPVAMNRR) are Cytoplasmic-facing. Residues 154 to 174 (MCAEMAGITWAIGATHAAIHT) traverse the membrane as a helical segment. The Extracellular segment spans residues 175–211 (SLTFRLLYCGPCHIAYFFCDIPPVLKLACTDTTINEL). Residues 212–231 (VMLASIGIVAAGCLILIVIS) traverse the membrane as a helical segment. Residues 232–251 (YIFIVAAVLRIRTAQGRQRA) are Cytoplasmic-facing. A helical transmembrane segment spans residues 252 to 272 (FSPCTAQLTGVLLYYVPPVCI). Residues 273-283 (YLQPRSSEAGA) lie on the Extracellular side of the membrane. Residues 284–304 (GAPAVFYTIVTPMLNPFIYTL) traverse the membrane as a helical segment. At 305–331 (RNKEVKHALQRLLCSSFRESTAGSPPP) the chain is on the cytoplasmic side.

It belongs to the G-protein coupled receptor 1 family.

The protein localises to the cell membrane. In terms of biological role, odorant receptor. This Homo sapiens (Human) protein is Olfactory receptor 10S1 (OR10S1).